We begin with the raw amino-acid sequence, 428 residues long: 3-phosphoshikimate 1-carboxyvinyltransferase (428 aa).

3-phosphoshikimate contacts are provided by Lys-21, Ser-22, and Arg-26. Lys-21 serves as a coordination point for phosphoenolpyruvate. Gly-91 and Arg-119 together coordinate phosphoenolpyruvate. 3-phosphoshikimate-binding residues include Ser-164, Gln-166, Asp-313, and Lys-340. Gln-166 serves as a coordination point for phosphoenolpyruvate. Residue Asp-313 is the Proton acceptor of the active site. Residues Arg-344 and Arg-386 each coordinate phosphoenolpyruvate.

Belongs to the EPSP synthase family. In terms of assembly, monomer.

The protein resides in the cytoplasm. The enzyme catalyses 3-phosphoshikimate + phosphoenolpyruvate = 5-O-(1-carboxyvinyl)-3-phosphoshikimate + phosphate. It functions in the pathway metabolic intermediate biosynthesis; chorismate biosynthesis; chorismate from D-erythrose 4-phosphate and phosphoenolpyruvate: step 6/7. In terms of biological role, catalyzes the transfer of the enolpyruvyl moiety of phosphoenolpyruvate (PEP) to the 5-hydroxyl of shikimate-3-phosphate (S3P) to produce enolpyruvyl shikimate-3-phosphate and inorganic phosphate. The sequence is that of 3-phosphoshikimate 1-carboxyvinyltransferase from Campylobacter jejuni subsp. jejuni serotype O:6 (strain 81116 / NCTC 11828).